The chain runs to 62 residues: Large ribosomal subunit protein bL28 (62 aa).

The interval 1–23 (MGKQCYVTGRKASTGNRRSHALN) is disordered.

The protein belongs to the bacterial ribosomal protein bL28 family.

The chain is Large ribosomal subunit protein bL28 from Staphylococcus carnosus (strain TM300).